The following is an 88-amino-acid chain: CRISPR-associated endoribonuclease Cas2 2 (88 aa).

D8 is a binding site for Mg(2+).

This sequence belongs to the CRISPR-associated endoribonuclease Cas2 protein family. Homodimer, forms a heterotetramer with a Cas1 homodimer. Mg(2+) serves as cofactor.

Functionally, CRISPR (clustered regularly interspaced short palindromic repeat), is an adaptive immune system that provides protection against mobile genetic elements (viruses, transposable elements and conjugative plasmids). CRISPR clusters contain sequences complementary to antecedent mobile elements and target invading nucleic acids. CRISPR clusters are transcribed and processed into CRISPR RNA (crRNA). Functions as a ssRNA-specific endoribonuclease. Involved in the integration of spacer DNA into the CRISPR cassette. The polypeptide is CRISPR-associated endoribonuclease Cas2 2 (cas22) (Saccharolobus solfataricus (strain ATCC 35092 / DSM 1617 / JCM 11322 / P2) (Sulfolobus solfataricus)).